The following is a 276-amino-acid chain: MKKEVKIVTVGDGLIGKTTLLMTYYTNEFNTRVYSSFDSEYLNPLTVIINDDVIEISLWENDGFDSDGVYKESPPFIKYQPNHINVFLLLFSISDRDSFNNCLTKWNFEIKQNYPSIPVVLCGIKTDLREEENLVYKNSIDNSHFISFSEGVNMANEIDAVGYYECSSLKKKGLSELFDVLAIVGYSNILTKKKDKIKFKNNNNNNNYNENNQNISDTENNDNNNNNNNNNNNNNNNNNNNNNNNNNNNNNNNNNENNNNSYKNHNNKTTNKCKIS.

11–18 (GDGLIGKT) is a binding site for GTP. The Effector region signature appears at 34-42 (YSSFDSEYL). Residues 60 to 64 (ENDGF) and 124 to 127 (IKTD) contribute to the GTP site. The interval 199–276 (FKNNNNNNNY…NKTTNKCKIS (78 aa)) is disordered. The span at 200-270 (KNNNNNNNYN…SYKNHNNKTT (71 aa)) shows a compositional bias: low complexity. C273 bears the Cysteine methyl ester mark. Residue C273 is the site of S-geranylgeranyl cysteine attachment. Positions 274-276 (KIS) are cleaved as a propeptide — removed in mature form.

The protein belongs to the small GTPase superfamily. Rho family.

It is found in the cell membrane. The sequence is that of Rho-related protein racO (racO) from Dictyostelium discoideum (Social amoeba).